The following is a 124-amino-acid chain: Small ribosomal subunit protein uS12 (124 aa).

The tract at residues 1–42 is disordered; the sequence is MPTIQQLVRKGRRPKVNKTKSPALRGNPQQRGVCSRVYTTTP. Basic residues predominate over residues 9–18; that stretch reads RKGRRPKVNK. A compositionally biased stretch (polar residues) spans 27–42; it reads NPQQRGVCSRVYTTTP. Asp-89 is subject to 3-methylthioaspartic acid.

Belongs to the universal ribosomal protein uS12 family. In terms of assembly, part of the 30S ribosomal subunit. Contacts proteins S8 and S17. May interact with IF1 in the 30S initiation complex.

Functionally, with S4 and S5 plays an important role in translational accuracy. In terms of biological role, interacts with and stabilizes bases of the 16S rRNA that are involved in tRNA selection in the A site and with the mRNA backbone. Located at the interface of the 30S and 50S subunits, it traverses the body of the 30S subunit contacting proteins on the other side and probably holding the rRNA structure together. The combined cluster of proteins S8, S12 and S17 appears to hold together the shoulder and platform of the 30S subunit. This chain is Small ribosomal subunit protein uS12, found in Tropheryma whipplei (strain TW08/27) (Whipple's bacillus).